Here is a 643-residue protein sequence, read N- to C-terminus: Threonine--tRNA ligase (643 aa).

The region spanning 1-65 (MIHITLPDGS…NKDMPLSIVT (65 aa)) is the TGS domain. A catalytic region spans residues 246-537 (DHRKLGRELD…LIEQHAGAMP (292 aa)). Zn(2+) is bound by residues cysteine 337, histidine 388, and histidine 514.

It belongs to the class-II aminoacyl-tRNA synthetase family. Homodimer. The cofactor is Zn(2+).

It is found in the cytoplasm. The catalysed reaction is tRNA(Thr) + L-threonine + ATP = L-threonyl-tRNA(Thr) + AMP + diphosphate + H(+). Functionally, catalyzes the attachment of threonine to tRNA(Thr) in a two-step reaction: L-threonine is first activated by ATP to form Thr-AMP and then transferred to the acceptor end of tRNA(Thr). Also edits incorrectly charged L-seryl-tRNA(Thr). In Delftia acidovorans (strain DSM 14801 / SPH-1), this protein is Threonine--tRNA ligase.